A 536-amino-acid polypeptide reads, in one-letter code: DEAD-box ATP-dependent RNA helicase 26 (536 aa).

The interval 1–44 (MMSGGPSDATHRKRRRRRGPKGSGVDGPSIPRAVTTNGAGPEEE) is disordered. Basic residues predominate over residues 11–20 (HRKRRRRRGP). The short motif at 74 to 102 (TRFDQCPVSPLSLKAIKDAGYEKMTQVQE) is the Q motif element. One can recognise a Helicase ATP-binding domain in the interval 105–282 (LPIILQGEDV…HIAMKRGYKF (178 aa)). An ATP-binding site is contributed by 118 to 125 (AKTGTGKT). Residues 230–233 (DEAD) carry the DEAD box motif. A Helicase C-terminal domain is found at 316–466 (VLKKHIAEDA…SIQTGVKDAL (151 aa)).

Belongs to the DEAD box helicase family.

It catalyses the reaction ATP + H2O = ADP + phosphate + H(+). The chain is DEAD-box ATP-dependent RNA helicase 26 from Oryza sativa subsp. japonica (Rice).